Consider the following 207-residue polypeptide: Putative acetyltransferase C18B11.09c (207 aa).

It belongs to the transferase hexapeptide repeat family.

This Schizosaccharomyces pombe (strain 972 / ATCC 24843) (Fission yeast) protein is Putative acetyltransferase C18B11.09c.